The primary structure comprises 112 residues: Iron-sulfur cluster insertion protein ErpA (112 aa).

The iron-sulfur cluster site is built by Cys-40, Cys-104, and Cys-106.

Belongs to the HesB/IscA family. As to quaternary structure, homodimer. The cofactor is iron-sulfur cluster.

Its function is as follows. Required for insertion of 4Fe-4S clusters for at least IspG. The polypeptide is Iron-sulfur cluster insertion protein ErpA (Pseudoalteromonas translucida (strain TAC 125)).